The sequence spans 239 residues: 2,3,4,5-tetrahydropyridine-2,6-dicarboxylate N-acetyltransferase (239 aa).

The protein belongs to the transferase hexapeptide repeat family. DapH subfamily.

The catalysed reaction is (S)-2,3,4,5-tetrahydrodipicolinate + acetyl-CoA + H2O = L-2-acetamido-6-oxoheptanedioate + CoA. The protein operates within amino-acid biosynthesis; L-lysine biosynthesis via DAP pathway; LL-2,6-diaminopimelate from (S)-tetrahydrodipicolinate (acetylase route): step 1/3. Functionally, catalyzes the transfer of an acetyl group from acetyl-CoA to tetrahydrodipicolinate. The protein is 2,3,4,5-tetrahydropyridine-2,6-dicarboxylate N-acetyltransferase of Staphylococcus aureus (strain MRSA252).